Consider the following 110-residue polypeptide: UPF0145 protein BLD_1357 (110 aa).

Belongs to the UPF0145 family.

The sequence is that of UPF0145 protein BLD_1357 from Bifidobacterium longum (strain DJO10A).